Here is a 240-residue protein sequence, read N- to C-terminus: 3-deoxy-D-manno-octulosonic acid kinase (240 aa).

The active site involves Asp170.

It belongs to the protein kinase superfamily. KdkA/RfaP family.

The protein localises to the cell inner membrane. It catalyses the reaction an alpha-Kdo-(2-&gt;6)-lipid IVA + ATP = a 4-O-phospho-alpha-Kdo-(2-&gt;6)-lipid IVA + ADP + H(+). Its pathway is bacterial outer membrane biogenesis; LPS core biosynthesis. Catalyzes the ATP-dependent phosphorylation of the 3-deoxy-D-manno-octulosonic acid (Kdo) residue in Kdo-lipid IV(A) at the 4-OH position. The protein is 3-deoxy-D-manno-octulosonic acid kinase of Mannheimia succiniciproducens (strain KCTC 0769BP / MBEL55E).